The chain runs to 441 residues: Mitochondrial inner membrane protein OXA1L (441 aa).

Topologically, residues 1 to 113 are mitochondrial intermembrane; sequence MALALMCGRR…QAAAEQSFAE (113 aa). A helical transmembrane segment spans residues 114-134; that stretch reads LGLGSYTPVGLIQNLLEFMHV. Residues 135–139 lie on the Mitochondrial matrix side of the membrane; that stretch reads NLGLP. The chain crosses the membrane as a helical span at residues 140–160; that stretch reads WWGAIAACTVLARCLVFPLIV. Over 161 to 212 the chain is Mitochondrial intermembrane; it reads KGQREAAKIHNHLPEIQKFSARIREAKLTGNHTEFYRASSEMTFYQKKHDIK. The chain crosses the membrane as a helical span at residues 213–233; the sequence is LFRPLILPLTQAPIFISFFIA. The Mitochondrial matrix portion of the chain corresponds to 234–260; that stretch reads LREMANLPVPSLQTGGLWWFQDLTLSD. Residues 261–281 traverse the membrane as a helical segment; that stretch reads PIYVLPLVVTATMWGVLELGA. Residues 282–298 lie on the Mitochondrial intermembrane side of the membrane; that stretch reads ETGMQSSDLQWMRNFIR. Residues 299–319 traverse the membrane as a helical segment; sequence LMPLAVLPITIHFPTAVFMYW. Topologically, residues 320 to 441 are mitochondrial matrix; the sequence is LSSNMFSLGQ…SKQPWRDTLG (122 aa). A Phosphoserine modification is found at Ser364. The residue at position 400 (Thr400) is a Phosphothreonine. Positions 405–441 are disordered; sequence PLLQHGKNDPPNTPNSSSSSSSSNKAKSKQPWRDTLG. Residues 418 to 429 show a composition bias toward low complexity; that stretch reads PNSSSSSSSSNK.

This sequence belongs to the OXA1/ALB3/YidC family. As to quaternary structure, monomer; predominantly monomeric at low salt concentrations. Homooligomer; predominantly homooligomeric at high salt concentrations. Associates with the mitochondrial ribosome. Associates preferentially as a dimer with the large ribosomal subunit 39S of the mitochondrial ribosome. Interacts with OXA1L; promoting cotranslational quality control in mitochondria.

It is found in the mitochondrion inner membrane. In terms of biological role, mitochondrial membrane insertase that mediates the cotranslational insertion of integral membrane proteins into the mitochondrial inner membrane. Essential for the activity and assembly of cytochrome oxidase. Required for the correct biogenesis of ATP synthase and complex I in mitochondria. The polypeptide is Mitochondrial inner membrane protein OXA1L (OXA1L) (Bos taurus (Bovine)).